A 98-amino-acid chain; its full sequence is MSLTYMNMFMAFMISLLGLLMYRSHMMSSLLCLEGMMLSLFVMMTVIILNTHLTLASMIPIILLVFAACEAALGLSLLVMVSTTYGMDYVQNLNLLQC.

The next 3 membrane-spanning stretches (helical) occupy residues 1 to 21 (MSLT…GLLM), 29 to 49 (SLLC…VIIL), and 61 to 81 (IILL…LVMV).

Belongs to the complex I subunit 4L family. As to quaternary structure, core subunit of respiratory chain NADH dehydrogenase (Complex I) which is composed of 45 different subunits.

Its subcellular location is the mitochondrion inner membrane. The catalysed reaction is a ubiquinone + NADH + 5 H(+)(in) = a ubiquinol + NAD(+) + 4 H(+)(out). In terms of biological role, core subunit of the mitochondrial membrane respiratory chain NADH dehydrogenase (Complex I) which catalyzes electron transfer from NADH through the respiratory chain, using ubiquinone as an electron acceptor. Part of the enzyme membrane arm which is embedded in the lipid bilayer and involved in proton translocation. This is NADH-ubiquinone oxidoreductase chain 4L (MT-ND4L) from Uroderma bilobatum (Tent-making bat).